We begin with the raw amino-acid sequence, 311 residues long: Manganese-dependent inorganic pyrophosphatase (311 aa).

Histidine 10, aspartate 14, aspartate 16, aspartate 75, histidine 97, and aspartate 149 together coordinate Mn(2+).

Belongs to the PPase class C family. As to quaternary structure, homodimer. Mn(2+) serves as cofactor.

It carries out the reaction diphosphate + H2O = 2 phosphate + H(+). The protein is Manganese-dependent inorganic pyrophosphatase (ppaC) of Methanothrix thermoacetophila (strain DSM 6194 / JCM 14653 / NBRC 101360 / PT) (Methanosaeta thermophila).